A 191-amino-acid chain; its full sequence is Guanylate kinase (191 aa).

The Guanylate kinase-like domain maps to 8–188; it reads GRLVVLAGPS…AVSDIKEILV (181 aa). 15-22 contributes to the ATP binding site; that stretch reads GPSAVGKS.

It belongs to the guanylate kinase family.

The protein resides in the cytoplasm. It catalyses the reaction GMP + ATP = GDP + ADP. In terms of biological role, essential for recycling GMP and indirectly, cGMP. This chain is Guanylate kinase, found in Corynebacterium diphtheriae (strain ATCC 700971 / NCTC 13129 / Biotype gravis).